The primary structure comprises 176 residues: UPF0262 protein GbCGDNIH1_1393 (176 aa).

It belongs to the UPF0262 family.

This Granulibacter bethesdensis (strain ATCC BAA-1260 / CGDNIH1) protein is UPF0262 protein GbCGDNIH1_1393.